A 92-amino-acid polypeptide reads, in one-letter code: Large ribosomal subunit protein eL43 (92 aa).

Residues Cys39 to Cys60 form a C4-type zinc finger.

It belongs to the eukaryotic ribosomal protein eL43 family.

The protein is Large ribosomal subunit protein eL43 (RpL37A) of Drosophila melanogaster (Fruit fly).